We begin with the raw amino-acid sequence, 375 residues long: Alpha-1,2-galactosyltransferase (375 aa).

Over 1–2 (MR) the chain is Cytoplasmic. Residues 3–23 (FAPYLISAVVITTIILGGAWW) form a helical; Signal-anchor for type II membrane protein membrane-spanning segment. Residues 24-375 (TSAMDTKLQT…HIQNLLKPSS (352 aa)) are Lumenal-facing.

The protein belongs to the glycosyltransferase 34 family. In terms of processing, O-glycosylated.

The protein resides in the golgi apparatus membrane. Functionally, involved in the O- and N-linked oligosaccharide modification of proteins transported through the Golgi stack. This occurs in cis Golgi where the enzyme transfers galactose from UDP-galactose to a variety of mannose based acceptors. The polypeptide is Alpha-1,2-galactosyltransferase (gma12) (Schizosaccharomyces pombe (strain 972 / ATCC 24843) (Fission yeast)).